A 196-amino-acid chain; its full sequence is Small ribosomal subunit protein uS4c (196 aa).

Positions 89-169 (MRLDNIIFRL…LPKHLTIDTV (81 aa)) constitute an S4 RNA-binding domain.

The protein belongs to the universal ribosomal protein uS4 family. In terms of assembly, part of the 30S ribosomal subunit. Contacts protein S5. The interaction surface between S4 and S5 is involved in control of translational fidelity.

The protein localises to the plastid. Its subcellular location is the chloroplast. In terms of biological role, one of the primary rRNA binding proteins, it binds directly to 16S rRNA where it nucleates assembly of the body of the 30S subunit. With S5 and S12 plays an important role in translational accuracy. This Stipellula capensis (Cape rice grass) protein is Small ribosomal subunit protein uS4c (rps4).